A 146-amino-acid chain; its full sequence is Protein beta (146 aa).

In Adelaide River virus (ARV), this protein is Protein beta.